The primary structure comprises 288 residues: Nucleotide-binding protein Veis_1053 (288 aa).

Residue 10-17 (GMSGSGKS) participates in ATP binding. 59 to 62 (DVRS) provides a ligand contact to GTP.

It belongs to the RapZ-like family.

Its function is as follows. Displays ATPase and GTPase activities. The protein is Nucleotide-binding protein Veis_1053 of Verminephrobacter eiseniae (strain EF01-2).